The sequence spans 94 residues: ESAT-6-like protein EsxO (94 aa).

Belongs to the WXG100 family. ESAT-6 subfamily. In terms of assembly, forms a complex with EsxP.

It is found in the secreted. In Mycobacterium tuberculosis (strain CDC 1551 / Oshkosh), this protein is ESAT-6-like protein EsxO.